The sequence spans 103 residues: N(4)-acetylcytidine amidohydrolase (103 aa).

The ASCH domain occupies 6-92 (TFFERFEQDI…VIQEIYPGLE (87 aa)). Lys20 serves as the catalytic Proton acceptor. The Nucleophile role is filled by Thr23. Glu73 functions as the Proton donor in the catalytic mechanism.

Belongs to the N(4)-acetylcytidine amidohydrolase family.

The catalysed reaction is N(4)-acetylcytidine + H2O = cytidine + acetate + H(+). It carries out the reaction N(4)-acetyl-2'-deoxycytidine + H2O = 2'-deoxycytidine + acetate + H(+). The enzyme catalyses N(4)-acetylcytosine + H2O = cytosine + acetate + H(+). Catalyzes the hydrolysis of N(4)-acetylcytidine (ac4C). In Shewanella sp. (strain MR-4), this protein is N(4)-acetylcytidine amidohydrolase.